Reading from the N-terminus, the 265-residue chain is MQALWPLLLSALPALLGASSLFVEKESNGSRICKPAPQWEIDGKTPMKELLGNVVVVALLKASUHFCLTQAARLGDLRDKLANGGLTNISFMVVNEQDSQSRAMYWELKRRTAQDIPVYQQSPLQNDVWEILEGDKDDFLVYDRCGYLTFHIVLPFSFLHYPYIEAAIRATYHKNMCNCSLNANFSISESSDSTKNDPAGENNQRPNSTEPVTAAHHHHHQQHEPHHHHHNPYPNSHKKSGDSDVTGKPKEPPHHSHQEHVHNHR.

The N-terminal stretch at 1 to 18 (MQALWPLLLSALPALLGA) is a signal peptide. A glycan (N-linked (GlcNAc...) asparagine) is linked at Asn28. A non-standard amino acid (selenocysteine) is located at residue Sec64. Residues Asn88, Asn178, Asn184, and Asn207 are each glycosylated (N-linked (GlcNAc...) asparagine). Residues 188–265 (SESSDSTKND…SHQEHVHNHR (78 aa)) form a disordered region. Positions 201–211 (ENNQRPNSTEP) are enriched in polar residues. The span at 215 to 231 (AHHHHHQQHEPHHHHHN) shows a compositional bias: basic residues. Residues 239 to 265 (KSGDSDVTGKPKEPPHHSHQEHVHNHR) show a composition bias toward basic and acidic residues.

The protein localises to the secreted. In terms of biological role, might be responsible for some of the extracellular antioxidant defense properties of selenium. This Danio rerio (Zebrafish) protein is Selenoprotein Pb (sepp1b).